The primary structure comprises 768 residues: Telomere repeats-binding bouquet formation protein 1 (768 aa).

ARM repeat units lie at residues 101–145 (ELFQ…REVG) and 341–384 (NGLP…GQNS). The stretch at 399 to 448 (ETLREHWKAAKEILCRIKQFEKGGKEEKQQNRSGHYKDNTPSMKVNIQTN) forms a coiled coil. Basic and acidic residues-rich tracts occupy residues 422-436 (GKEE…HYKD) and 461-475 (RAED…ELRS). Disordered stretches follow at residues 422–441 (GKEE…TPSM) and 454–475 (ADST…ELRS). The interval 524–700 (QNLDKEKTFD…EAMERRSPVP (177 aa)) is interaction with TERF1. At threonine 648 the chain carries Phosphothreonine. The region spanning 707-760 (KKRRIRKDFTKEEVNYLFHGVKTMGNHWNSILWSFPFQKGRRAVDLAHKYHRLI) is the Myb-like domain.

Belongs to the TERB1 family. In terms of assembly, component of the MAJIN-TERB1-TERB2 complex, composed of MAJIN, TERB1 and TERB2. Interacts with TERF1, STAG3 and SUN1. Interacts (via Myb-like domain) with the cohesin complex; probably mediated via interaction with STAG3. Post-translationally, phosphorylated by CDK. Phosphorylation by CDK takes place in late prophase when the cap exchange is prominent. is important for the stabilization of telomere attachment but dispenable for the cap exchange. Expressed in testis and fetal oocytes.

It localises to the chromosome. Its subcellular location is the telomere. It is found in the nucleus inner membrane. Meiosis-specific telomere-associated protein involved in meiotic telomere attachment to the nucleus inner membrane, a crucial step for homologous pairing and synapsis. Component of the MAJIN-TERB1-TERB2 complex, which promotes telomere cap exchange by mediating attachment of telomeric DNA to the inner nuclear membrane and replacement of the protective cap of telomeric chromosomes: in early meiosis, the MAJIN-TERB1-TERB2 complex associates with telomeric DNA and the shelterin/telosome complex. During prophase, the complex matures and promotes release of the shelterin/telosome complex from telomeric DNA. In the MAJIN-TERB1-TERB2 complex, TERB1 probably mediates association with the shelterin/telosome complex via interaction with TERF1, promoting priming telomeric DNA attachment'. Promotes telomere association with the nuclear envelope and deposition of the SUN-KASH/LINC complex. Also recruits cohesin to telomeres to develop structural rigidity. This Mus musculus (Mouse) protein is Telomere repeats-binding bouquet formation protein 1.